Consider the following 88-residue polypeptide: MANTPSAKKAVRKIERRTAVNKSRRSQMRTYVRKVEEAIASGDREAATQALRAAEPLVMRAAQKGIVHKNTASRKVSRLSARVSSLGS.

It belongs to the bacterial ribosomal protein bS20 family.

Functionally, binds directly to 16S ribosomal RNA. This is Small ribosomal subunit protein bS20 from Methylocella silvestris (strain DSM 15510 / CIP 108128 / LMG 27833 / NCIMB 13906 / BL2).